We begin with the raw amino-acid sequence, 367 residues long: MKEGEKMKPYEHGGNIYDYQGNLIDFSSNINPLGPPEWIWEAIKEVDLSRYPDIKYRRLKEAIAEYVGCDRENIIVGNGAAELIHLFARAFKLKKPLIPSPSFLEYERAVKLNGGEPVYLKLEEEEGFRVNFAKVISKIEEADGLILGNPNNPTGQGIIREEIGILLKKAELMNIPVLIDEAFIEFMKDYKKYEALPLVKKHDKLFVVRAVTKFFGMPGIRLGYGIGSPSLIQKLEEYKEPWTVNAFAEAVGRWLFKDREYIEKTREYVNAEIEHMLFSLRTIDYLVAFDTKVNFILLKLKAGTVDEVKEKLLKKGILIRDASNFRYLDKRFFRVAVKRREDNMCLIEALRGLYEEGVMPDKERVVV.

Residues 12-13 (HG), Asn-29, and Asn-152 contribute to the O-phospho-L-threonine site. Lys-213 carries the post-translational modification N6-(pyridoxal phosphate)lysine. O-phospho-L-threonine is bound by residues Arg-320 and Arg-334.

It belongs to the class-II pyridoxal-phosphate-dependent aminotransferase family. Pyridoxal 5'-phosphate serves as cofactor.

The enzyme catalyses O-phospho-L-threonine + H(+) = (R)-1-aminopropan-2-yl phosphate + CO2. It functions in the pathway cofactor biosynthesis; adenosylcobalamin biosynthesis. Its function is as follows. Decarboxylates L-threonine-O-3-phosphate to yield (R)-1-amino-2-propanol O-2-phosphate, the precursor for the linkage between the nucleotide loop and the corrin ring in cobalamin. The protein is Putative threonine-phosphate decarboxylase (cobD) of Caldanaerobacter subterraneus subsp. tengcongensis (strain DSM 15242 / JCM 11007 / NBRC 100824 / MB4) (Thermoanaerobacter tengcongensis).